Reading from the N-terminus, the 404-residue chain is 2,3-bisphosphoglycerate-independent phosphoglycerate mutase (404 aa).

Residues Leu-155–Arg-183 are disordered. The span at Ser-162 to Arg-183 shows a compositional bias: basic and acidic residues.

Belongs to the BPG-independent phosphoglycerate mutase family. A-PGAM subfamily.

It carries out the reaction (2R)-2-phosphoglycerate = (2R)-3-phosphoglycerate. It participates in carbohydrate degradation; glycolysis; pyruvate from D-glyceraldehyde 3-phosphate: step 3/5. Functionally, catalyzes the interconversion of 2-phosphoglycerate and 3-phosphoglycerate. The protein is 2,3-bisphosphoglycerate-independent phosphoglycerate mutase of Thermoplasma acidophilum (strain ATCC 25905 / DSM 1728 / JCM 9062 / NBRC 15155 / AMRC-C165).